The sequence spans 68 residues: UPF0253 protein VFMJ11_0680 (68 aa).

Belongs to the UPF0253 family.

This chain is UPF0253 protein VFMJ11_0680, found in Aliivibrio fischeri (strain MJ11) (Vibrio fischeri).